Consider the following 790-residue polypeptide: F-box and leucine-rich repeat protein 13 (790 aa).

In terms of domain architecture, F-box spans 237-283 (AFDISVLPEQAILQIFLYLTFKDMMACSRVNRSWMAMIQRGSLWNSI). LRR repeat units follow at residues 503 to 525 (QLTV…HFFD), 531 to 552 (RLRE…IRLS), 557 to 579 (NLHY…YIAS), 582 to 602 (SLIS…TILS), 606 to 628 (KLRE…AYCK), and 632 to 657 (LLEH…IFCT).

The protein belongs to the DRC6 family. In terms of assembly, component of the nexin-dynein regulatory complex (N-DRC). Directly interacts with SKP1 and CUL1. Interacts with TCTE1/DRC5.

Its subcellular location is the cytoplasm. The protein localises to the cytoskeleton. It localises to the flagellum axoneme. It is found in the microtubule organizing center. The protein resides in the centrosome. Its function is as follows. Substrate-recognition component of the SCF (SKP1-CUL1-F-box protein)-type E3 ubiquitin ligase complex. Component of the nexin-dynein regulatory complex (N-DRC), a key regulator of ciliary/flagellar motility which maintains the alignment and integrity of the distal axoneme and regulates microtubule sliding in motile axonemes. Specifically targets CEP192 isoform 3 for ubiquitin-mediated proteolysis and thereby acts as a regulator of microtubule nucleation activity. In Mus musculus (Mouse), this protein is F-box and leucine-rich repeat protein 13 (Fbxl13).